A 312-amino-acid chain; its full sequence is tRNA dimethylallyltransferase (312 aa).

Position 10-17 (10-17) interacts with ATP; it reads GPTASGKS. Residue 12–17 participates in substrate binding; it reads TASGKS. Residues 35–38 form an interaction with substrate tRNA region; that stretch reads DSKQ.

This sequence belongs to the IPP transferase family. As to quaternary structure, monomer. Mg(2+) serves as cofactor.

The catalysed reaction is adenosine(37) in tRNA + dimethylallyl diphosphate = N(6)-dimethylallyladenosine(37) in tRNA + diphosphate. Catalyzes the transfer of a dimethylallyl group onto the adenine at position 37 in tRNAs that read codons beginning with uridine, leading to the formation of N6-(dimethylallyl)adenosine (i(6)A). This Anaplasma phagocytophilum (strain HZ) protein is tRNA dimethylallyltransferase.